A 448-amino-acid polypeptide reads, in one-letter code: Probable D-serine dehydratase (448 aa).

The residue at position 119 (lysine 119) is an N6-(pyridoxal phosphate)lysine.

This sequence belongs to the serine/threonine dehydratase family. DsdA subfamily. It depends on pyridoxal 5'-phosphate as a cofactor.

The enzyme catalyses D-serine = pyruvate + NH4(+). The chain is Probable D-serine dehydratase from Pseudomonas aeruginosa (strain UCBPP-PA14).